Reading from the N-terminus, the 786-residue chain is Endonuclease MutS2 (786 aa).

332-339 (GPNTGGKT) is a binding site for ATP. Residues 711–786 (IDLRGMDSEE…GTGVTVVILK (76 aa)) form the Smr domain.

This sequence belongs to the DNA mismatch repair MutS family. MutS2 subfamily. Homodimer. Binds to stalled ribosomes, contacting rRNA.

Functionally, endonuclease that is involved in the suppression of homologous recombination and thus may have a key role in the control of bacterial genetic diversity. Acts as a ribosome collision sensor, splitting the ribosome into its 2 subunits. Detects stalled/collided 70S ribosomes which it binds and splits by an ATP-hydrolysis driven conformational change. Acts upstream of the ribosome quality control system (RQC), a ribosome-associated complex that mediates the extraction of incompletely synthesized nascent chains from stalled ribosomes and their subsequent degradation. Probably generates substrates for RQC. The polypeptide is Endonuclease MutS2 (Clostridium perfringens (strain SM101 / Type A)).